Reading from the N-terminus, the 309-residue chain is Ubiquitin domain-containing protein UBFD1 (309 aa).

The tract at residues 1–80 (MAAAGAPDGM…VSNGEDAGGG (80 aa)) is disordered. Positions 9–19 (GMEEPGMDTEA) are enriched in acidic residues. Over residues 35–57 (EAEAAAGAAAEDSGAARGSLQPA) the composition is skewed to low complexity. The 76-residue stretch at 84 to 159 (ELVDLKIIWN…IMVVGSTIND (76 aa)) folds into the Ubiquitin-like domain. Positions 171–204 (QQDAKAEENKKEPLCRQKQHRKVLDKGKPEDVMP) are disordered. 2 stretches are compositionally biased toward basic and acidic residues: residues 174–185 (AKAEENKKEPLC) and 192–201 (KVLDKGKPED).

Binds polyubiquitin.

Functionally, may play a role as NF-kappa-B regulator. The sequence is that of Ubiquitin domain-containing protein UBFD1 (UBFD1) from Homo sapiens (Human).